A 130-amino-acid chain; its full sequence is Ribonuclease P protein component (130 aa).

This sequence belongs to the RnpA family. In terms of assembly, consists of a catalytic RNA component (M1 or rnpB) and a protein subunit.

It carries out the reaction Endonucleolytic cleavage of RNA, removing 5'-extranucleotides from tRNA precursor.. Functionally, RNaseP catalyzes the removal of the 5'-leader sequence from pre-tRNA to produce the mature 5'-terminus. It can also cleave other RNA substrates such as 4.5S RNA. The protein component plays an auxiliary but essential role in vivo by binding to the 5'-leader sequence and broadening the substrate specificity of the ribozyme. The chain is Ribonuclease P protein component from Azotobacter vinelandii (strain DJ / ATCC BAA-1303).